The chain runs to 228 residues: N-acetyltransferase family 8 member 3 (228 aa).

A run of 2 helical transmembrane segments spans residues 36–56 and 58–78; these read MLLL…LFLA and GSWL…WLLA. An N-acetyltransferase domain is found at 61–217; sequence LLVLLSTLTL…RNSPMICLKY (157 aa).

The protein belongs to the camello family.

The protein localises to the nucleus membrane. It localises to the cytoplasm. Its subcellular location is the perinuclear region. It catalyses the reaction L-lysyl-[protein] + acetyl-CoA = N(6)-acetyl-L-lysyl-[protein] + CoA + H(+). In terms of biological role, has histone acetyltransferase activity in vitro, with specificity for histone H4. The sequence is that of N-acetyltransferase family 8 member 3 from Rattus norvegicus (Rat).